The primary structure comprises 209 residues: Small ribosomal subunit protein uS3 (209 aa).

Residues Ile17–Lys86 enclose the KH type-2 domain.

It belongs to the universal ribosomal protein uS3 family. Part of the 30S ribosomal subunit.

Functionally, binds the lower part of the 30S subunit head. The protein is Small ribosomal subunit protein uS3 of Thermococcus gammatolerans (strain DSM 15229 / JCM 11827 / EJ3).